A 464-amino-acid chain; its full sequence is Protein FAM90A9 (464 aa).

3 disordered regions span residues 1–42, 70–389, and 411–437; these read MMAR…DPRL, PATL…HDGA, and APSF…SEAP. Basic and acidic residues-rich tracts occupy residues 74 to 89 and 97 to 114; these read GKKE…KPRV and NKDK…DPQR. Over residues 180–197 the composition is skewed to low complexity; sequence LASLSPLRKASLSSSSSL.

It belongs to the FAM90 family.

This is Protein FAM90A9 (FAM90A9) from Homo sapiens (Human).